A 977-amino-acid chain; its full sequence is Phosphatidylinositol 4-kinase PIK1alpha (977 aa).

Residues 1-125 (MSADITETPN…QAVRNLITKI (125 aa)) form the PIK helical domain. The tract at residues 205–261 (MSADIPKGSHSDDETATSSSIKPSLSRSASVPRRNTKKTSLSFSSDESEAYTTDDDD) is disordered. Over residues 220 to 233 (ATSSSIKPSLSRSA) the composition is skewed to polar residues. Over residues 250-261 (DESEAYTTDDDD) the composition is skewed to acidic residues. The region spanning 679 to 960 (EDWNTKKQRI…FLIGKSLGSM (282 aa)) is the PI3K/PI4K catalytic domain. The tract at residues 685–691 (KQRIKKS) is G-loop. The interval 826–834 (QIKDRHNGN) is catalytic loop. The activation loop stretch occupies residues 845 to 869 (HIDFGFLLSNSPGSVGFEAAPFKLT).

The protein belongs to the PI3/PI4-kinase family. Type III PI4K subfamily.

The protein resides in the nucleus. It carries out the reaction a 1,2-diacyl-sn-glycero-3-phospho-(1D-myo-inositol) + ATP = a 1,2-diacyl-sn-glycero-3-phospho-(1D-myo-inositol 4-phosphate) + ADP + H(+). Functionally, acts on phosphatidylinositol (PI) in the first committed step in the production of the second messenger inositol 1,4,5,-trisphosphate. This is Phosphatidylinositol 4-kinase PIK1alpha (PIKALPHA) from Candida albicans (strain SC5314 / ATCC MYA-2876) (Yeast).